We begin with the raw amino-acid sequence, 132 residues long: Small ribosomal subunit protein uS8 (132 aa).

It belongs to the universal ribosomal protein uS8 family. As to quaternary structure, part of the 30S ribosomal subunit. Contacts proteins S5 and S12.

In terms of biological role, one of the primary rRNA binding proteins, it binds directly to 16S rRNA central domain where it helps coordinate assembly of the platform of the 30S subunit. The chain is Small ribosomal subunit protein uS8 from Pediococcus pentosaceus (strain ATCC 25745 / CCUG 21536 / LMG 10740 / 183-1w).